The chain runs to 261 residues: Type III pantothenate kinase (261 aa).

Position 7-14 (7-14) interacts with ATP; sequence EQGNTNTM. A substrate-binding site is contributed by 108–111; the sequence is GADR. Catalysis depends on Asp-110, which acts as the Proton acceptor. Asp-130 provides a ligand contact to K(+). Thr-133 is an ATP binding site. Thr-187 contributes to the substrate binding site.

The protein belongs to the type III pantothenate kinase family. As to quaternary structure, homodimer. NH4(+) is required as a cofactor. The cofactor is K(+).

It is found in the cytoplasm. The catalysed reaction is (R)-pantothenate + ATP = (R)-4'-phosphopantothenate + ADP + H(+). Its pathway is cofactor biosynthesis; coenzyme A biosynthesis; CoA from (R)-pantothenate: step 1/5. In terms of biological role, catalyzes the phosphorylation of pantothenate (Pan), the first step in CoA biosynthesis. This chain is Type III pantothenate kinase, found in Caulobacter vibrioides (strain ATCC 19089 / CIP 103742 / CB 15) (Caulobacter crescentus).